Reading from the N-terminus, the 880-residue chain is Tyrosine-protein kinase receptor TYRO3 (880 aa).

The N-terminal stretch at 1–30 (MALRRSMGWPGLRPLLLAGLASLLLPGSAA) is a signal peptide. Ig-like C2-type domains are found at residues 31-118 (AGLK…TKIS) and 129-209 (PFFT…PAIV). Residues 31 to 419 (AGLKLMGAPV…QGPPHSRTSW (389 aa)) lie on the Extracellular side of the membrane. 8 N-linked (GlcNAc...) asparagine glycosylation sites follow: Asn-53, Asn-75, Asn-181, Asn-220, Asn-230, Asn-283, Asn-356, and Asn-370. 2 disulfide bridges follow: Cys-54/Cys-107 and Cys-150/Cys-193. Fibronectin type-III domains lie at 217–310 (APFN…TKGL) and 315–406 (APQN…SHDH). Residues 420-440 (VPVVLGVLTALITAAALALIL) traverse the membrane as a helical segment. The Cytoplasmic segment spans residues 441–880 (LRKRRKETRF…QQGLLPHSSC (440 aa)). Ser-456 is subject to Phosphoserine. One can recognise a Protein kinase domain in the interval 508 to 785 (FTLGRMLGKG…LENILGHLSV (278 aa)). ATP contacts are provided by residues 514–522 (LGKGEFGSV) and Lys-540. Asp-645 functions as the Proton acceptor in the catalytic mechanism. Tyr-671, Tyr-675, Tyr-676, and Tyr-794 each carry phosphotyrosine; by autocatalysis. The segment at 800 to 864 (AEQPTESGSP…QQPESPLNEN (65 aa)) is disordered. 2 positions are modified to phosphoserine: Ser-808 and Ser-859. Over residues 849-864 (SPGQLEQQPESPLNEN) the composition is skewed to polar residues.

Belongs to the protein kinase superfamily. Tyr protein kinase family. AXL/UFO subfamily. In terms of assembly, monomer and homodimer. Interacts (via N-terminus) with extracellular ligands TULP1 and GAS6. Interacts with PIK3R1; this interaction increases PI3-kinase activity. Post-translationally, autophosphorylated. In terms of tissue distribution, abundant in the brain and lower levels in other tissues.

It localises to the cell membrane. It carries out the reaction L-tyrosyl-[protein] + ATP = O-phospho-L-tyrosyl-[protein] + ADP + H(+). Its function is as follows. Receptor tyrosine kinase that transduces signals from the extracellular matrix into the cytoplasm by binding to several ligands including TULP1 or GAS6. Regulates many physiological processes including cell survival, migration and differentiation. Ligand binding at the cell surface induces dimerization and autophosphorylation of TYRO3 on its intracellular domain that provides docking sites for downstream signaling molecules. Following activation by ligand, interacts with PIK3R1 and thereby enhances PI3-kinase activity. Activates the AKT survival pathway, including nuclear translocation of NF-kappa-B and up-regulation of transcription of NF-kappa-B-regulated genes. TYRO3 signaling plays a role in various processes such as neuron protection from excitotoxic injury, platelet aggregation and cytoskeleton reorganization. Also plays an important role in inhibition of Toll-like receptors (TLRs)-mediated innate immune response by activating STAT1, which selectively induces production of suppressors of cytokine signaling SOCS1 and SOCS3. The chain is Tyrosine-protein kinase receptor TYRO3 (Tyro3) from Mus musculus (Mouse).